A 316-amino-acid polypeptide reads, in one-letter code: Protein C4 (316 aa).

This sequence belongs to the poxviridae OPG031 protein family.

Its subcellular location is the host cytoplasm. It is found in the host nucleus. Plays a role in the inhibition of host NF-kappa-B activation. Mechanistically, blocks the subunit p65/RELA translocation into the host nucleus. The polypeptide is Protein C4 (OPG031) (Homo sapiens (Human)).